Reading from the N-terminus, the 1663-residue chain is Cortactin-binding protein 2 (1663 aa).

Positions 1–26 (MATDGASCEPDLSRAPEDAAGATAEA) are disordered. The stretch at 119–275 (RKMQERMSAQ…IEQLKKGGDS (157 aa)) forms a coiled coil. 2 disordered regions span residues 355–440 (SIDR…LHPG) and 454–478 (GNANDPDQNGNTTQSPPSRDVSPTS). The span at 386 to 403 (PSTDSTPDPTSSTPLLSS) shows a compositional bias: low complexity. A compositionally biased stretch (polar residues) spans 404–422 (NAAPPTAQTPGITPQNSQA). Arginine 498 carries the post-translational modification Asymmetric dimethylarginine. Residues 499–614 (FTGPQAGAPP…KSSSPQLPPK (116 aa)) are disordered. Positions 583–593 (TVASPPSSLPQ) are enriched in polar residues. ANK repeat units follow at residues 709 to 739 (GRPTLLQQAAAQGNVTLLSMLLNEEGLDINY), 743 to 772 (DGHSALYSAAKNGHTDCVRLLLSAEAQVNA), 776 to 805 (NGFTPLCAAAAQGHFECVELLIAYDANINH), 809 to 838 (GGQTPLYLACKNGNKECIKLLLEAGTDRCV), and 842 to 871 (DGWTPVHAAVDTGNVDSLKLLMYHRVPAHG). Residues 872–897 (NSFSEEESESGVFDLDGEEESPEGKS) are disordered. Residues 875 to 892 (SEEESESGVFDLDGEEES) show a composition bias toward acidic residues. One copy of the ANK 6 repeat lies at 912–942 (EGWTAAHIAAAKGFKNCLEILCRHGGLEPER). Residues 1446–1482 (SKKKGESGAWRKVNTSPRRKSGRFSLPTWNKPDLSTE) are disordered. Serine 1524 bears the Phosphoserine mark. The segment at 1617–1663 (RSKVTQCSQNTKSSSSSSNTRQIEINNNSKEENWNLHKNEHLEKANK) is disordered. Polar residues-rich tracts occupy residues 1619–1628 (KVTQCSQNTK) and 1635–1644 (NTRQIEINNN). Residues 1645–1663 (SKEENWNLHKNEHLEKANK) are compositionally biased toward basic and acidic residues.

Interacts with CTTN/cortactin SH3 domain. Interacts with STRN, STRN4/zinedin and MOB4/phocein; this interactions mediate the association with the STRIPAK core complex and may regulate dendritic spine distribution of the STRIPAK complex in hippocampal neurons. Activation of glutamate receptors weakens the interaction with STRN and STRN4.

It is found in the cytoplasm. Its subcellular location is the cell cortex. The protein localises to the cell projection. It localises to the dendritic spine. Regulates the dendritic spine distribution of CTTN/cortactin in hippocampal neurons, and thus controls dendritic spinogenesis and dendritic spine maintenance. Associates with the striatin-interacting phosphatase and kinase (STRIPAK) core complex to regulate dendritic spine distribution of the STRIPAK complex in hippocampal neurons. In Plecturocebus moloch (Dusky titi monkey), this protein is Cortactin-binding protein 2 (CTTNBP2).